The chain runs to 184 residues: ATP synthase subunit b, chloroplastic (184 aa).

The helical transmembrane segment at 27–49 (LATNLINLSVVFGVLIFFGKGVL) threads the bilayer.

This sequence belongs to the ATPase B chain family. In terms of assembly, F-type ATPases have 2 components, F(1) - the catalytic core - and F(0) - the membrane proton channel. F(1) has five subunits: alpha(3), beta(3), gamma(1), delta(1), epsilon(1). F(0) has four main subunits: a(1), b(1), b'(1) and c(10-14). The alpha and beta chains form an alternating ring which encloses part of the gamma chain. F(1) is attached to F(0) by a central stalk formed by the gamma and epsilon chains, while a peripheral stalk is formed by the delta, b and b' chains.

The protein resides in the plastid. Its subcellular location is the chloroplast thylakoid membrane. Its function is as follows. F(1)F(0) ATP synthase produces ATP from ADP in the presence of a proton or sodium gradient. F-type ATPases consist of two structural domains, F(1) containing the extramembraneous catalytic core and F(0) containing the membrane proton channel, linked together by a central stalk and a peripheral stalk. During catalysis, ATP synthesis in the catalytic domain of F(1) is coupled via a rotary mechanism of the central stalk subunits to proton translocation. Functionally, component of the F(0) channel, it forms part of the peripheral stalk, linking F(1) to F(0). The protein is ATP synthase subunit b, chloroplastic of Aethionema cordifolium (Lebanon stonecress).